The chain runs to 458 residues: UDP-N-acetylmuramoylalanine--D-glutamate ligase (458 aa).

124-130 (GSDGKTT) contributes to the ATP binding site.

It belongs to the MurCDEF family.

It is found in the cytoplasm. The enzyme catalyses UDP-N-acetyl-alpha-D-muramoyl-L-alanine + D-glutamate + ATP = UDP-N-acetyl-alpha-D-muramoyl-L-alanyl-D-glutamate + ADP + phosphate + H(+). Its pathway is cell wall biogenesis; peptidoglycan biosynthesis. Cell wall formation. Catalyzes the addition of glutamate to the nucleotide precursor UDP-N-acetylmuramoyl-L-alanine (UMA). This is UDP-N-acetylmuramoylalanine--D-glutamate ligase from Clostridium beijerinckii (strain ATCC 51743 / NCIMB 8052) (Clostridium acetobutylicum).